Consider the following 581-residue polypeptide: Probable peptidoglycan D,D-transpeptidase PenA (581 aa).

Residues 28–48 form a helical membrane-spanning segment; sequence ISFVLMAIAVLFAGLIARGLY. Residue serine 310 is the Acyl-ester intermediate of the active site.

The protein belongs to the transpeptidase family. FtsI subfamily.

The protein localises to the cell inner membrane. It carries out the reaction Preferential cleavage: (Ac)2-L-Lys-D-Ala-|-D-Ala. Also transpeptidation of peptidyl-alanyl moieties that are N-acyl substituents of D-alanine.. Its pathway is cell wall biogenesis; peptidoglycan biosynthesis. Its function is as follows. Catalyzes cross-linking of the peptidoglycan cell wall at the division septum. The protein is Probable peptidoglycan D,D-transpeptidase PenA of Neisseria meningitidis serogroup A / serotype 4A (strain DSM 15465 / Z2491).